The chain runs to 497 residues: L-asparagine permease (497 aa).

12 helical membrane-spanning segments follow: residues 34 to 54 (QVQM…GAGA), 58 to 78 (MAGP…FFIL), 109 to 129 (VAGW…ITAV), 146 to 166 (VFAL…VKWF), 171 to 191 (FWFA…GTIF), 219 to 239 (LLPA…IELV), 264 to 284 (IGLF…WNAY), 298 to 318 (LGVP…ALSS), 353 to 373 (YAGI…NYLV), 378 to 398 (FEIV…FIMV), 422 to 442 (APFT…LMAF), and 448 to 468 (TYTI…WFGV).

The protein belongs to the amino acid-polyamine-organocation (APC) superfamily. Amino acid transporter (AAT) (TC 2.A.3.1) family.

The protein resides in the cell inner membrane. This Salmonella typhimurium (strain LT2 / SGSC1412 / ATCC 700720) protein is L-asparagine permease (ansP).